Here is a 486-residue protein sequence, read N- to C-terminus: Cardiolipin synthase A (486 aa).

The next 2 membrane-spanning stretches (helical) occupy residues 3–23 and 38–58; these read TFYT…IAGV and MTWL…YFAF. 2 PLD phosphodiesterase domains span residues 219-246 and 399-426; these read MDLR…VDPR and EDGL…DMRS. Catalysis depends on residues H224, K226, D231, H404, K406, and D411.

Belongs to the phospholipase D family. Cardiolipin synthase subfamily. ClsA sub-subfamily.

Its subcellular location is the cell inner membrane. The enzyme catalyses 2 a 1,2-diacyl-sn-glycero-3-phospho-(1'-sn-glycerol) = a cardiolipin + glycerol. Its function is as follows. Catalyzes the reversible phosphatidyl group transfer from one phosphatidylglycerol molecule to another to form cardiolipin (CL) (diphosphatidylglycerol) and glycerol. This is Cardiolipin synthase A from Proteus mirabilis (strain HI4320).